A 503-amino-acid polypeptide reads, in one-letter code: Cobyric acid synthase (503 aa).

The GATase cobBQ-type domain occupies Asp251–Phe450. Catalysis depends on Cys331, which acts as the Nucleophile. His442 is an active-site residue.

Belongs to the CobB/CobQ family. CobQ subfamily.

Its pathway is cofactor biosynthesis; adenosylcobalamin biosynthesis. Its function is as follows. Catalyzes amidations at positions B, D, E, and G on adenosylcobyrinic A,C-diamide. NH(2) groups are provided by glutamine, and one molecule of ATP is hydrogenolyzed for each amidation. This is Cobyric acid synthase from Dehalococcoides mccartyi (strain CBDB1).